Reading from the N-terminus, the 439-residue chain is Xylose isomerase (439 aa).

Active-site residues include His-103 and Asp-106. Mg(2+) is bound by residues Glu-234, Glu-270, His-273, Asp-298, Asp-309, Asp-311, and Asp-341.

Belongs to the xylose isomerase family. As to quaternary structure, homotetramer. It depends on Mg(2+) as a cofactor.

It localises to the cytoplasm. It catalyses the reaction alpha-D-xylose = alpha-D-xylulofuranose. This is Xylose isomerase from Bacteroides fragilis (strain YCH46).